The sequence spans 530 residues: Autoinducer-2 kinase (530 aa).

It belongs to the FGGY kinase family.

It localises to the cytoplasm. The enzyme catalyses (S)-4,5-dihydroxypentane-2,3-dione + ATP = (2S)-2-hydroxy-3,4-dioxopentyl phosphate + ADP + H(+). In terms of biological role, catalyzes the phosphorylation of autoinducer-2 (AI-2) to phospho-AI-2, which subsequently inactivates the transcriptional regulator LsrR and leads to the transcription of the lsr operon. Phosphorylates the ring-open form of (S)-4,5-dihydroxypentane-2,3-dione (DPD), which is the precursor to all AI-2 signaling molecules, at the C5 position. The protein is Autoinducer-2 kinase of Escherichia coli (strain K12 / DH10B).